The primary structure comprises 429 residues: Phosphoribosylamine--glycine ligase (429 aa).

An ATP-grasp domain is found at 109-316; the sequence is KDFLARHHIP…LVELCLAACD (208 aa). 135 to 196 serves as a coordination point for ATP; that stretch reads LREKGAPIVV…EEFLDGEEAS (62 aa). The segment at 209 to 231 is disordered; it reads MATSQDHKRVGENDTGLNTGGMG. Glu286 and Asn288 together coordinate Mg(2+).

This sequence belongs to the GARS family. Mg(2+) is required as a cofactor. Requires Mn(2+) as cofactor.

It catalyses the reaction 5-phospho-beta-D-ribosylamine + glycine + ATP = N(1)-(5-phospho-beta-D-ribosyl)glycinamide + ADP + phosphate + H(+). It participates in purine metabolism; IMP biosynthesis via de novo pathway; N(1)-(5-phospho-D-ribosyl)glycinamide from 5-phospho-alpha-D-ribose 1-diphosphate: step 2/2. The chain is Phosphoribosylamine--glycine ligase from Pasteurella multocida (strain Pm70).